The sequence spans 87 residues: Phosphoribosyl-ATP pyrophosphatase (87 aa).

The protein belongs to the PRA-PH family.

It is found in the cytoplasm. It catalyses the reaction 1-(5-phospho-beta-D-ribosyl)-ATP + H2O = 1-(5-phospho-beta-D-ribosyl)-5'-AMP + diphosphate + H(+). It functions in the pathway amino-acid biosynthesis; L-histidine biosynthesis; L-histidine from 5-phospho-alpha-D-ribose 1-diphosphate: step 2/9. This Corynebacterium glutamicum (strain ATCC 13032 / DSM 20300 / JCM 1318 / BCRC 11384 / CCUG 27702 / LMG 3730 / NBRC 12168 / NCIMB 10025 / NRRL B-2784 / 534) protein is Phosphoribosyl-ATP pyrophosphatase (hisE).